Here is a 201-residue protein sequence, read N- to C-terminus: 3-isopropylmalate dehydratase small subunit (201 aa).

The protein belongs to the LeuD family. LeuD type 1 subfamily. As to quaternary structure, heterodimer of LeuC and LeuD.

It carries out the reaction (2R,3S)-3-isopropylmalate = (2S)-2-isopropylmalate. The protein operates within amino-acid biosynthesis; L-leucine biosynthesis; L-leucine from 3-methyl-2-oxobutanoate: step 2/4. Functionally, catalyzes the isomerization between 2-isopropylmalate and 3-isopropylmalate, via the formation of 2-isopropylmaleate. The sequence is that of 3-isopropylmalate dehydratase small subunit from Shewanella putrefaciens (strain CN-32 / ATCC BAA-453).